A 449-amino-acid chain; its full sequence is Protein CapK (449 aa).

It participates in capsule biogenesis; capsule polysaccharide biosynthesis. Required for the biosynthesis of type 1 capsular polysaccharide. The protein is Protein CapK (capK) of Staphylococcus aureus.